The chain runs to 410 residues: Arginine biosynthesis bifunctional protein ArgJ (410 aa).

Substrate is bound by residues Thr-160, Lys-186, Thr-197, Glu-283, Asn-405, and Thr-410. The active-site Nucleophile is the Thr-197.

Belongs to the ArgJ family. Heterotetramer of two alpha and two beta chains.

It is found in the cytoplasm. It catalyses the reaction N(2)-acetyl-L-ornithine + L-glutamate = N-acetyl-L-glutamate + L-ornithine. It carries out the reaction L-glutamate + acetyl-CoA = N-acetyl-L-glutamate + CoA + H(+). It functions in the pathway amino-acid biosynthesis; L-arginine biosynthesis; L-ornithine and N-acetyl-L-glutamate from L-glutamate and N(2)-acetyl-L-ornithine (cyclic): step 1/1. Its pathway is amino-acid biosynthesis; L-arginine biosynthesis; N(2)-acetyl-L-ornithine from L-glutamate: step 1/4. With respect to regulation, competitively inhibited by L-ornithine. Catalyzes two activities which are involved in the cyclic version of arginine biosynthesis: the synthesis of N-acetylglutamate from glutamate and acetyl-CoA as the acetyl donor, and of ornithine by transacetylation between N(2)-acetylornithine and glutamate. The polypeptide is Arginine biosynthesis bifunctional protein ArgJ (Geobacillus stearothermophilus (Bacillus stearothermophilus)).